The sequence spans 309 residues: Branched-chain-amino-acid aminotransferase (309 aa).

N6-(pyridoxal phosphate)lysine is present on Lys160.

This sequence belongs to the class-IV pyridoxal-phosphate-dependent aminotransferase family. As to quaternary structure, homohexamer. It depends on pyridoxal 5'-phosphate as a cofactor.

It catalyses the reaction L-leucine + 2-oxoglutarate = 4-methyl-2-oxopentanoate + L-glutamate. The catalysed reaction is L-isoleucine + 2-oxoglutarate = (S)-3-methyl-2-oxopentanoate + L-glutamate. It carries out the reaction L-valine + 2-oxoglutarate = 3-methyl-2-oxobutanoate + L-glutamate. Its pathway is amino-acid biosynthesis; L-isoleucine biosynthesis; L-isoleucine from 2-oxobutanoate: step 4/4. It participates in amino-acid biosynthesis; L-leucine biosynthesis; L-leucine from 3-methyl-2-oxobutanoate: step 4/4. The protein operates within amino-acid biosynthesis; L-valine biosynthesis; L-valine from pyruvate: step 4/4. Functionally, acts on leucine, isoleucine and valine. The polypeptide is Branched-chain-amino-acid aminotransferase (ilvE) (Escherichia coli O157:H7).